The sequence spans 276 residues: Glucosamine-6-phosphate deaminase 2 (276 aa).

Catalysis depends on Asp-72, which acts as the Proton acceptor; for enolization step. The stretch at 105-130 (HILDGNAADLQAECDAFENKIKEAGG) forms a coiled coil. Catalysis depends on Asp-141, which acts as the For ring-opening step. The active-site Proton acceptor; for ring-opening step is the His-143. Glu-148 functions as the For ring-opening step in the catalytic mechanism. Residue Thr-161 is modified to Phosphothreonine.

This sequence belongs to the glucosamine/galactosamine-6-phosphate isomerase family. Homohexamer. As to expression, ubiquitous, with highest expression detected in testis, ovary, placenta, and heart.

The protein localises to the cytoplasm. The enzyme catalyses alpha-D-glucosamine 6-phosphate + H2O = beta-D-fructose 6-phosphate + NH4(+). It participates in nucleotide-sugar biosynthesis; UDP-N-acetyl-alpha-D-glucosamine biosynthesis; alpha-D-glucosamine 6-phosphate from D-fructose 6-phosphate: step 1/1. Its activity is regulated as follows. Allosterically activated by N-acetylglucosamine-6-phosphate (GlcNAc6P). Catalyzes the reversible conversion of alpha-D-glucosamine 6-phosphate (GlcN-6P) into beta-D-fructose 6-phosphate (Fru-6P) and ammonium ion, a regulatory reaction step in de novo uridine diphosphate-N-acetyl-alpha-D-glucosamine (UDP-GlcNAc) biosynthesis via hexosamine pathway. Deamination is coupled to aldo-keto isomerization mediating the metabolic flux from UDP-GlcNAc toward Fru-6P. At high ammonium level can drive amination and isomerization of Fru-6P toward hexosamines and UDP-GlcNAc synthesis. Has a role in fine tuning the metabolic fluctuations of cytosolic UDP-GlcNAc and their effects on hyaluronan synthesis that occur during tissue remodeling. The sequence is that of Glucosamine-6-phosphate deaminase 2 from Homo sapiens (Human).